The sequence spans 555 residues: MGIEDNSQQPNTGSPYGQSPPSQYNPYGQQPPQQQQYNPYGEQQQQPQQQQQYGYQPQFQPTYQQPPPQPQYYSQAQMPFPPQQQQPPPITNLNKANDRESLIGGVGGGGIPPNNNQTMVGSYNEGETKFAPPKYQDIWFSILFGLNFGLLIVVSASAFAKTPYTYYDSNYYDNTSGGSFGFLFAILPFTIVFSLLYIWAWLKLAANHAESLIKYSFFGAMGLMIGYCVFFFVWGAIYLGIIFAIMAFFIILFYISCRSRIPFTATLLSNAVAIIKEYPSVIRAGYVSIFINFVWFIVWGSAFARVNMVYTGAIQTCINIYLVFTLYWVFHVIKNTLHTTVSGLLATWYFCSGPNGVGMPHNPTLGSARRALTTSFGSICFGSLIISLIETLRYLSQMMINNRNVVVKIIGYIFNCILSMLSSIVQFFNTYAFTHVAIYGKSFCDSAKSTFTMFENRLGSTIINDNFVGTTIAIGGLVASLLLSILGALISIPFDMSVYGGALALFIGYLVIITNLEVVYSSTISLFVCYVMEPEVLAHTKPQLYQLYSSTYHLR.

The segment covering 1 to 17 (MGIEDNSQQPNTGSPYG) has biased composition (polar residues). The tract at residues 1-101 (MGIEDNSQQP…NLNKANDRES (101 aa)) is disordered. A compositionally biased stretch (low complexity) spans 19-63 (SPPSQYNPYGQQPPQQQQYNPYGEQQQQPQQQQQYGYQPQFQPTY). The segment covering 79–90 (PFPPQQQQPPPI) has biased composition (pro residues). The N-linked (GlcNAc...) asparagine glycan is linked to asparagine 116. The helical transmembrane segment at 138 to 158 (IWFSILFGLNFGLLIVVSASA) threads the bilayer. N-linked (GlcNAc...) asparagine glycosylation is present at asparagine 174. Helical transmembrane passes span 182 to 202 (FLFA…WAWL), 210 to 230 (ESLI…YCVF), 231 to 251 (FFVW…FFII), 284 to 304 (AGYV…SAFA), 313 to 333 (AIQT…FHVI), 340 to 360 (TVSG…VGMP), 372 to 392 (LTTS…IETL), 405 to 425 (VVVK…SSIV), 472 to 492 (IAIG…LISI), and 493 to 513 (PFDM…LVII).

Belongs to the CTL (choline transporter-like) family.

Its subcellular location is the membrane. The polypeptide is CTL-like protein DDB_G0274487 (Dictyostelium discoideum (Social amoeba)).